The sequence spans 293 residues: MGLISNPTRLILVATIFFLVSSISGQDSVVENNERQESEGSGKELGRRGMVGTERIGVDTVVDNIGALGLNLDLDATAPSVFDALFSSFSMILVTEIGDETFIIAALMAMRHPKATVLSGALSALFVMTILSTGLGRIVPNLISRKHTNSAATVLYAFFGLRLLYIAWRSTDSKSNQKKEMEEVEEKLESGQGKTPFRRLFSRFCTPIFLESFILTFLAEWGDRSQIATIALATHKNAIGVAIGASIGHTVCTSLAVVGGSMLASRISQRTVATVGGLLFLGFSVSSYFYPPL.

The first 25 residues, 1–25, serve as a signal peptide directing secretion; that stretch reads MGLISNPTRLILVATIFFLVSSISG. 6 helical membrane-spanning segments follow: residues 89 to 109, 115 to 135, 148 to 168, 200 to 220, 238 to 258, and 272 to 292; these read FSMILVTEIGDETFIIAALMA, ATVLSGALSALFVMTILSTGL, TNSAATVLYAFFGLRLLYIAW, LFSRFCTPIFLESFILTFLAE, AIGVAIGASIGHTVCTSLAVV, and VATVGGLLFLGFSVSSYFYPP.

The protein belongs to the GDT1 family.

It is found in the membrane. The polypeptide is GDT1-like protein 3 (Arabidopsis thaliana (Mouse-ear cress)).